A 346-amino-acid polypeptide reads, in one-letter code: MLKVAINGFGRIGRNVLRAVYESGKHQQIKVVAVNELAQPEAMAHLLQYDTSHGRFGKRISHDQEHLYVHHDACPQGKGEFDSIRILHLSEINLLPWRDLEVDLVLDCTGVFGCQADGLEHIKAGAKKVLFSHPGASDLDNTIIYGVNHETLKAEHNVVSNGSCTTNCIVPIIKVLDEAFGIESGTITTIHSSMNDQQVIDAYHSDLRRTRAASQSIIPVDTKLHKGIERIFPKFSNKFEAISVRVPTVNVTAMDLSVTINTNVKVNDVNQTIVNASQCTLRGIVDYTEAPLVSIDFNHDPHSAIVDGSQTRVSNGHLVKMLVWCDNEWGFANRMLDTALAMQAAQ.

11–12 contributes to the NAD(+) binding site; that stretch reads RI. Substrate contacts are provided by residues 163-165, arginine 209, 222-223, and arginine 245; these read SCT and TK. The active-site Nucleophile is the cysteine 164. Asparagine 327 contacts NAD(+).

This sequence belongs to the glyceraldehyde-3-phosphate dehydrogenase family. Epd subfamily. As to quaternary structure, homotetramer.

The protein resides in the cytoplasm. The enzyme catalyses D-erythrose 4-phosphate + NAD(+) + H2O = 4-phospho-D-erythronate + NADH + 2 H(+). It participates in cofactor biosynthesis; pyridoxine 5'-phosphate biosynthesis; pyridoxine 5'-phosphate from D-erythrose 4-phosphate: step 1/5. Functionally, catalyzes the NAD-dependent conversion of D-erythrose 4-phosphate to 4-phosphoerythronate. The chain is D-erythrose-4-phosphate dehydrogenase from Vibrio vulnificus (strain CMCP6).